Here is a 250-residue protein sequence, read N- to C-terminus: 2,5-dichloro-2,5-cyclohexadiene-1,4-diol dehydrogenase (250 aa).

Residue 9–34 participates in NAD(+) binding; the sequence is IIVTGGGSGIGRATVELLVASGANVA. Position 141 (Ser-141) interacts with substrate. Tyr-154 (proton acceptor) is an active-site residue.

The protein belongs to the short-chain dehydrogenases/reductases (SDR) family.

The enzyme catalyses 2,5-dichlorocyclohexa-2,5-dien-1,4-diol + NAD(+) = 2,5-dichlorohydroquinone + NADH + H(+). The protein operates within xenobiotic degradation; gamma-hexachlorocyclohexane degradation. Catalyzes the dehydrogenation of 2,5-dichloro-2,5-cyclohexadiene-1,4-diol (2,5-DDOL) to 2,5-dichlorohydroquinone (2,5-DCHQ), a step in the degradation of gamma-hexachlorocyclohexane (gamma-HCH or lindane). This is 2,5-dichloro-2,5-cyclohexadiene-1,4-diol dehydrogenase from Sphingobium indicum (strain DSM 16412 / CCM 7286 / MTCC 6364 / B90A).